The chain runs to 431 residues: Tol-Pal system protein TolB (431 aa).

Positions 1–26 (MSLMTKLGFRALVASCLITAGSAANA) are cleaved as a signal peptide. The tract at residues 406 to 431 (DGSAPPQILSVQGGSVREPSWGPFMQ) is disordered.

The protein belongs to the TolB family. As to quaternary structure, the Tol-Pal system is composed of five core proteins: the inner membrane proteins TolA, TolQ and TolR, the periplasmic protein TolB and the outer membrane protein Pal. They form a network linking the inner and outer membranes and the peptidoglycan layer.

It is found in the periplasm. In terms of biological role, part of the Tol-Pal system, which plays a role in outer membrane invagination during cell division and is important for maintaining outer membrane integrity. The protein is Tol-Pal system protein TolB of Burkholderia orbicola (strain AU 1054).